A 271-amino-acid chain; its full sequence is Interleukin-1 alpha (271 aa).

Residues 1–112 (MAKVPDMFED…DSEEEIIKPR (112 aa)) constitute a propeptide that is removed on maturation. Lysine 82 carries the post-translational modification N6-acetyllysine. The tract at residues 82–86 (KKRRL) is nuclear localization signal (NLS). Phosphoserine is present on serine 87. Residues asparagine 102, asparagine 121, asparagine 137, and asparagine 141 are each glycosylated (N-linked (GlcNAc...) asparagine).

This sequence belongs to the IL-1 family. As to quaternary structure, monomer. Interacts with TMED10; the interaction mediates the translocation from the cytoplasm into the ERGIC (endoplasmic reticulum-Golgi intermediate compartment) and thereby secretion. Interacts with IL1R1. Interacts with S100A13; this interaction is the first step in the export of IL1A, followed by direct translocation of this complex across the plasma membrane. Acetylated within its nuclear localization sequence, which impacts subcellular localization. Post-translationally, proteolytic processed by CAPN1 in a calcium-dependent manner. Cleavage from 31 kDa precursor to 18 kDa biologically active molecules. In terms of processing, phosphorylated. Phosphorylation greatly enhances susceptibility to digestion and promotes the conversion of pre-IL1A alpha to the biologically active IL1A.

It is found in the nucleus. The protein resides in the cytoplasm. The protein localises to the secreted. Functionally, cytokine constitutively present intracellularly in nearly all resting non-hematopoietic cells that plays an important role in inflammation and bridges the innate and adaptive immune systems. After binding to its receptor IL1R1 together with its accessory protein IL1RAP, forms the high affinity interleukin-1 receptor complex. Signaling involves the recruitment of adapter molecules such as MYD88, IRAK1 or IRAK4. In turn, mediates the activation of NF-kappa-B and the three MAPK pathways p38, p42/p44 and JNK pathways. Within the cell, acts as an alarmin and cell death results in its liberation in the extracellular space after disruption of the cell membrane to induce inflammation and alert the host to injury or damage. In addition to its role as a danger signal, which occurs when the cytokine is passively released by cell necrosis, directly senses DNA damage and acts as signal for genotoxic stress without loss of cell integrity. This is Interleukin-1 alpha (IL1A) from Macaca fascicularis (Crab-eating macaque).